The chain runs to 65 residues: Alpha-toxin Bot11 (65 aa).

Residues 2 to 64 (KDGYIVDDRN…VRTVQAGRCR (63 aa)) enclose the LCN-type CS-alpha/beta domain. Intrachain disulfides connect Cys12–Cys63, Cys16–Cys36, Cys22–Cys46, and Cys26–Cys48.

This sequence belongs to the long (4 C-C) scorpion toxin superfamily. Sodium channel inhibitor family. Alpha subfamily. As to expression, expressed by the venom gland.

Its subcellular location is the secreted. Functionally, alpha toxins bind voltage-independently at site-3 of sodium channels (Nav) and inhibit the inactivation of the activated channels, thereby blocking neuronal transmission. The sequence is that of Alpha-toxin Bot11 from Buthus occitanus tunetanus (Common European scorpion).